Reading from the N-terminus, the 238-residue chain is RxLR effector protein PITG_14788 (238 aa).

Residues 1–23 (MKSLHAVNLVLLLLLACFAPAPA) form the signal peptide. The short motif at 47-65 (RLLRAHSSGKEEQKEEEER) is the RxLR-dEER element.

The protein belongs to the RxLR effector family.

It is found in the secreted. It localises to the host cytoplasm. The protein localises to the host cytoskeleton. The protein resides in the host nucleus. Its subcellular location is the host nucleolus. Its function is as follows. Effector that enhances P.infestans colonization of Nicotiana benthamiana leaves. The sequence is that of RxLR effector protein PITG_14788 from Phytophthora infestans (strain T30-4) (Potato late blight agent).